We begin with the raw amino-acid sequence, 120 residues long: Large ribosomal subunit protein bL19 (120 aa).

Belongs to the bacterial ribosomal protein bL19 family.

Functionally, this protein is located at the 30S-50S ribosomal subunit interface and may play a role in the structure and function of the aminoacyl-tRNA binding site. This is Large ribosomal subunit protein bL19 from Chlorobium chlorochromatii (strain CaD3).